The chain runs to 243 residues: Collagen triple helix repeat-containing protein 1 (243 aa).

The first 30 residues, 1-30 (MRPQGPAASPQRLRGLLLLLLLQLPAPSSA), serve as a signal peptide directing secretion. Positions 57–90 (QGPAGVPGRDGSPGANGIPGTPGIPGRDGFKGEK) constitute a Collagen-like domain. The tract at residues 62–85 (VPGRDGSPGANGIPGTPGIPGRDG) is disordered. Asparagine 186 carries an N-linked (GlcNAc...) asparagine glycan.

N-glycosylated. Isoform 1 is expressed in calcified atherosclerotic plaque and chondrocyte-like cells.

It localises to the secreted. The protein localises to the extracellular space. It is found in the extracellular matrix. Its function is as follows. May act as a negative regulator of collagen matrix deposition. In Homo sapiens (Human), this protein is Collagen triple helix repeat-containing protein 1 (CTHRC1).